The chain runs to 460 residues: Vitamin K-dependent protein C (460 aa).

Residues 1-18 (MWQFRVFLLLMSTWGISS) form the signal peptide. Residues 19-41 (IPAHPDPVFSSSEHAHQVLRVRR) constitute a propeptide that is removed on maturation. Residues 42–87 (ANSFLEEMRPGSLERECMEEICDFEEAQEIFQNVEDTLAFWIKYFD) enclose the Gla domain. Residues Glu47, Glu48, Glu55, Glu57, Glu60, Glu61, Glu66, Glu67, Glu70, and Glu76 each carry the 4-carboxyglutamate modification. An intrachain disulfide couples Cys58 to Cys63. Cystine bridges form between Cys91–Cys110, Cys100–Cys105, Cys104–Cys119, Cys121–Cys130, Cys139–Cys150, Cys146–Cys159, Cys161–Cys174, Cys182–Cys319, and Cys238–Cys254. 2 EGF-like domains span residues 96 to 131 (LDHQCDSPCCGHGTCIDGIGSFSCSCDKGWEGKFCQ) and 135 to 175 (RFQD…MRCK). Asp112 carries the (3R)-3-hydroxyaspartate modification. One can recognise a Peptidase S1 domain in the interval 213–449 (VNGTLTKQGD…YLKWIHSYIG (237 aa)). Asn214 carries an N-linked (GlcNAc...) asparagine glycan. Catalysis depends on His253, which acts as the Charge relay system. Asn290 carries N-linked (GlcNAc...) asparagine glycosylation. Asp299 functions as the Charge relay system in the catalytic mechanism. N-linked (GlcNAc...) asparagine glycosylation is present at Asn354. 2 disulfide bridges follow: Cys372-Cys386 and Cys397-Cys425. The Charge relay system role is filled by Ser401.

The protein belongs to the peptidase S1 family. As to quaternary structure, synthesized as a single chain precursor, which is cleaved into a light chain and a heavy chain held together by a disulfide bond. The enzyme is then activated by thrombin, which cleaves a tetradecapeptide from the amino end of the heavy chain; this reaction, which occurs at the surface of endothelial cells, is strongly promoted by thrombomodulin. Post-translationally, the vitamin K-dependent, enzymatic carboxylation of some Glu residues allows the modified protein to bind calcium. The iron and 2-oxoglutarate dependent 3-hydroxylation of aspartate and asparagine is (R) stereospecific within EGF domains. As to expression, plasma; synthesized in the liver.

The protein localises to the secreted. It localises to the golgi apparatus. It is found in the endoplasmic reticulum. It carries out the reaction Degradation of blood coagulation factors Va and VIIIa.. Functionally, protein C is a vitamin K-dependent serine protease that regulates blood coagulation by inactivating factors Va and VIIIa in the presence of calcium ions and phospholipids. Exerts a protective effect on the endothelial cell barrier function. This is Vitamin K-dependent protein C (Proc) from Mus musculus (Mouse).